The primary structure comprises 266 residues: Phosphatidate cytidylyltransferase (266 aa).

8 helical membrane passes run F16 to A36, L52 to A72, P78 to A98, S101 to Y121, G125 to F145, L164 to G184, L186 to F206, and L237 to W257.

It belongs to the CDS family.

The protein localises to the cell inner membrane. It catalyses the reaction a 1,2-diacyl-sn-glycero-3-phosphate + CTP + H(+) = a CDP-1,2-diacyl-sn-glycerol + diphosphate. The protein operates within phospholipid metabolism; CDP-diacylglycerol biosynthesis; CDP-diacylglycerol from sn-glycerol 3-phosphate: step 3/3. The polypeptide is Phosphatidate cytidylyltransferase (cdsA) (Helicobacter pylori (strain ATCC 700392 / 26695) (Campylobacter pylori)).